We begin with the raw amino-acid sequence, 399 residues long: Stomatin-like protein 1 (399 aa).

The Tyrosine-type lysosomal sorting signal signature appears at 6–10; that stretch reads GYRAL. At serine 28 the chain carries Phosphoserine. Residues 58–78 traverse the membrane as a helical; Signal-anchor for type III membrane protein segment; the sequence is LVSVLGFLLLLLTFPISGWFA. At 79–399 the chain is on the cytoplasmic side; the sequence is LKIVPTYERM…KLEAVLKALK (321 aa). The SCP2 domain occupies 288-399; the sequence is KQPVAEGLLT…KLEAVLKALK (112 aa).

It belongs to the band 7/mec-2 family. Interacts with STOM; may redistribute STOM from the plasma membrane to late endosomes. As to expression, expressed in dorsal root ganglion neurons.

It localises to the membrane. It is found in the cytoplasmic vesicle. Its subcellular location is the cell membrane. The protein resides in the late endosome membrane. The protein localises to the membrane raft. Its function is as follows. May play a role in cholesterol transfer to late endosomes. May play a role in modulating membrane acid-sensing ion channels. Can specifically inhibit proton-gated current of ASIC1 isoform 1. Can increase inactivation speed of ASIC3. May be involved in regulation of proton sensing in dorsal root ganglions. This chain is Stomatin-like protein 1 (Stoml1), found in Mus musculus (Mouse).